Here is a 285-residue protein sequence, read N- to C-terminus: MGKHVQLVMGPAGSGKSTYCDTMRKYCEEIKRSVHIVNLDPAAEVFEYPVSVDIKNLVTVDEVMDELHYGPNGGLVYAMEYLIENMDWLTDELGDYEDDYLIIDCPGQIELYSHIPVMRILVDHLQQIGYSVCSVFLVDSQFILDNCKFISGALMCLSAMVRLEVPHINVLTKIDVLKTSDQYKEIEKFLDLEVQNLVEELNLETHDRYHRMNKAIGSLLEDFSLVGFVPLDITDQESLNVLLQHIDNSIQYGEDLEPKEPPLENDDDDDDDEGDEIIRMMNGNL.

13–18 (GSGKST) provides a ligand contact to GTP. Residues 70–72 (GPN) carry the Gly-Pro-Asn (GPN)-loop; involved in dimer interface motif. 172-175 (TKID) is a GTP binding site. A disordered region spans residues 253-276 (GEDLEPKEPPLENDDDDDDDEGDE). Positions 263 to 275 (LENDDDDDDDEGD) are enriched in acidic residues.

It belongs to the GPN-loop GTPase family. Heterodimer with gpn1. Binds to RNA polymerase II (RNAPII).

Functionally, small GTPase required for proper localization of RNA polymerase II (RNAPII). May act at an RNAP assembly step prior to nuclear import. The chain is GPN-loop GTPase 3 (gpn3) from Dictyostelium discoideum (Social amoeba).